The sequence spans 354 residues: MGICKCKKRSEDFCFNHKKFICDSCVVADHSICYIKSYVSWLTDCEFEDSVCGVCKGKFDVDDNDDSVRLLCYHLYHPECIDVYVAALPQNSSVESYPCPKCPEPILPSNDKQSLLANSIRDRFSVSSWAGDYLKSFKKQNSNSNNNNNDNNNPKSNGITNGINGTHINNATSPEFYTNLDSIKSNGIHHHHHHSNNSNNNNIINPSLLEETPPLSHLNSNPYGLASRKHEHEDTVIQLNSGTNSNISNNIHGNNKIYDDDYDKYNKRPVNPISKIINNIKETKPKYLIMITVAIIVFLILISKMGSNSDSNDNIVGDNNNNNNNININNDNNGGNGAINEETLNDQKIPNNGQ.

The B box-type; degenerate zinc finger occupies 1–41 (MGICKCKKRSEDFCFNHKKFICDSCVVADHSICYIKSYVSW). The segment at 52-103 (CGVCKGKFDVDDNDDSVRLLCYHLYHPECIDVYVAALPQNSSVESYPCPKCP) adopts an RING-type; atypical zinc-finger fold. Disordered regions lie at residues 139 to 167 (KQNSNSNNNNNDNNNPKSNGITNGINGTH) and 187 to 225 (GIHHHHHHSNNSNNNNIINPSLLEETPPLSHLNSNPYGL). Residues 196–205 (NNSNNNNIIN) are compositionally biased toward low complexity. The helical transmembrane segment at 287-307 (YLIMITVAIIVFLILISKMGS) threads the bilayer. A disordered region spans residues 326 to 354 (ININNDNNGGNGAINEETLNDQKIPNNGQ).

This sequence belongs to the ZFPL1 family.

The protein resides in the membrane. The chain is Zinc finger protein-like 1 homolog (zfpl1) from Dictyostelium discoideum (Social amoeba).